Consider the following 1140-residue polypeptide: Chromosome partition protein Smc (1140 aa).

Proline 34–asparagine 41 is an ATP binding site. The stretch at valine 160–serine 484 forms a coiled coil. Residues glutamate 502–leucine 619 form the SMC hinge domain. Residues leucine 660–phenylalanine 990 are a coiled coil.

Belongs to the SMC family. In terms of assembly, homodimer.

It localises to the cytoplasm. Its function is as follows. Required for chromosome condensation and partitioning. The protein is Chromosome partition protein Smc of Thermoplasma acidophilum (strain ATCC 25905 / DSM 1728 / JCM 9062 / NBRC 15155 / AMRC-C165).